Consider the following 154-residue polypeptide: SsrA-binding protein (154 aa).

Belongs to the SmpB family.

Its subcellular location is the cytoplasm. Its function is as follows. Required for rescue of stalled ribosomes mediated by trans-translation. Binds to transfer-messenger RNA (tmRNA), required for stable association of tmRNA with ribosomes. tmRNA and SmpB together mimic tRNA shape, replacing the anticodon stem-loop with SmpB. tmRNA is encoded by the ssrA gene; the 2 termini fold to resemble tRNA(Ala) and it encodes a 'tag peptide', a short internal open reading frame. During trans-translation Ala-aminoacylated tmRNA acts like a tRNA, entering the A-site of stalled ribosomes, displacing the stalled mRNA. The ribosome then switches to translate the ORF on the tmRNA; the nascent peptide is terminated with the 'tag peptide' encoded by the tmRNA and targeted for degradation. The ribosome is freed to recommence translation, which seems to be the essential function of trans-translation. The polypeptide is SsrA-binding protein (Methylobacillus flagellatus (strain ATCC 51484 / DSM 6875 / VKM B-1610 / KT)).